The following is a 407-amino-acid chain: Shaggy-related protein kinase GSK1 (407 aa).

Residues 1–19 (MEAPPGPEPMELDAPPPPA) show a composition bias toward pro residues. Residues 1 to 21 (MEAPPGPEPMELDAPPPPAAV) are disordered. Positions 68 to 352 (YMAERVVGTG…ALDACAHSFF (285 aa)) constitute a Protein kinase domain. ATP contacts are provided by residues 74-82 (VGTGSFGIV) and K97. D193 (proton acceptor) is an active-site residue.

The protein belongs to the protein kinase superfamily. CMGC Ser/Thr protein kinase family. GSK-3 subfamily. Interacts with LIC. Highly expressed in the entire young panicles, spikelets, awns, vascular bundles of palea and lemma, stigma and rachilla. Expressed in root tips, root hairs, lamina joint in the collar region, vascular bundles of coleoptiles.

It catalyses the reaction L-seryl-[protein] + ATP = O-phospho-L-seryl-[protein] + ADP + H(+). The enzyme catalyses L-threonyl-[protein] + ATP = O-phospho-L-threonyl-[protein] + ADP + H(+). Functionally, probable serine-threonine kinase that may act as a negative regulator of brassinosteroid (BR) signaling during flower development. May have physiological roles in stress signal-transduction pathways. Phosphorylates LIC in response to BR perception. This Oryza sativa subsp. japonica (Rice) protein is Shaggy-related protein kinase GSK1.